The following is a 241-amino-acid chain: Uridylate kinase (241 aa).

12 to 15 serves as a coordination point for ATP; that stretch reads KISG. Residues 20–25 form an involved in allosteric activation by GTP region; the sequence is GDKGNG. Gly54 contributes to the UMP binding site. ATP is bound by residues Gly55 and Arg59. Residues Asp74 and 135–142 each bind UMP; that span reads TGNPYFST. 3 residues coordinate ATP: Asn163, Tyr169, and Asp172.

This sequence belongs to the UMP kinase family. Homohexamer.

Its subcellular location is the cytoplasm. It carries out the reaction UMP + ATP = UDP + ADP. The protein operates within pyrimidine metabolism; CTP biosynthesis via de novo pathway; UDP from UMP (UMPK route): step 1/1. With respect to regulation, allosterically activated by GTP. Inhibited by UTP. Catalyzes the reversible phosphorylation of UMP to UDP. The sequence is that of Uridylate kinase from Lactobacillus acidophilus (strain ATCC 700396 / NCK56 / N2 / NCFM).